A 557-amino-acid chain; its full sequence is Arginine--tRNA ligase (557 aa).

Positions 128-138 (ANPTGPLHVGH) match the 'HIGH' region motif.

Belongs to the class-I aminoacyl-tRNA synthetase family. As to quaternary structure, monomer.

The protein resides in the cytoplasm. The enzyme catalyses tRNA(Arg) + L-arginine + ATP = L-arginyl-tRNA(Arg) + AMP + diphosphate. This is Arginine--tRNA ligase from Thiobacillus denitrificans (strain ATCC 25259 / T1).